Consider the following 243-residue polypeptide: Ribonuclease PH (243 aa).

Phosphate-binding positions include R91 and G129–R131.

This sequence belongs to the RNase PH family. As to quaternary structure, homohexameric ring arranged as a trimer of dimers.

The enzyme catalyses tRNA(n+1) + phosphate = tRNA(n) + a ribonucleoside 5'-diphosphate. Its function is as follows. Phosphorolytic 3'-5' exoribonuclease that plays an important role in tRNA 3'-end maturation. Removes nucleotide residues following the 3'-CCA terminus of tRNAs; can also add nucleotides to the ends of RNA molecules by using nucleoside diphosphates as substrates, but this may not be physiologically important. Probably plays a role in initiation of 16S rRNA degradation (leading to ribosome degradation) during starvation. The chain is Ribonuclease PH from Burkholderia lata (strain ATCC 17760 / DSM 23089 / LMG 22485 / NCIMB 9086 / R18194 / 383).